Reading from the N-terminus, the 699-residue chain is Ribosomal RNA large subunit methyltransferase K/L (699 aa).

The 112-residue stretch at 44 to 155 (DAYKLCLWSR…RDNVILGIDL (112 aa)) folds into the THUMP domain.

This sequence belongs to the methyltransferase superfamily. RlmKL family.

Its subcellular location is the cytoplasm. It carries out the reaction guanosine(2445) in 23S rRNA + S-adenosyl-L-methionine = N(2)-methylguanosine(2445) in 23S rRNA + S-adenosyl-L-homocysteine + H(+). It catalyses the reaction guanosine(2069) in 23S rRNA + S-adenosyl-L-methionine = N(2)-methylguanosine(2069) in 23S rRNA + S-adenosyl-L-homocysteine + H(+). In terms of biological role, specifically methylates the guanine in position 2445 (m2G2445) and the guanine in position 2069 (m7G2069) of 23S rRNA. This chain is Ribosomal RNA large subunit methyltransferase K/L, found in Alteromonas mediterranea (strain DSM 17117 / CIP 110805 / LMG 28347 / Deep ecotype).